We begin with the raw amino-acid sequence, 129 residues long: Small ribosomal subunit protein uS9 (129 aa).

This sequence belongs to the universal ribosomal protein uS9 family.

The chain is Small ribosomal subunit protein uS9 (rpsI) from Treponema pallidum (strain Nichols).